Reading from the N-terminus, the 423-residue chain is NDP-N-acetyl-D-galactosaminuronic acid dehydrogenase (423 aa).

NAD(+) is bound at residue 11-28 (TISVVGLGYIGLPTATVL). The Proton donor/acceptor role is filled by Lys218. Cys272 functions as the Nucleophile in the catalytic mechanism.

It belongs to the UDP-glucose/GDP-mannose dehydrogenase family.

Its function is as follows. Probably involved in synthesis of sugar components of EPS I, by converting NDP-N-acetyl-D-galactosamine into NDP-N-acetyl-D-galactosaminuronic acid. In Ralstonia solanacearum (Pseudomonas solanacearum), this protein is NDP-N-acetyl-D-galactosaminuronic acid dehydrogenase (epsD).